The following is a 169-amino-acid chain: S-ribosylhomocysteine lyase (169 aa).

Fe cation is bound by residues H54, H58, and C129.

This sequence belongs to the LuxS family. As to quaternary structure, homodimer. Requires Fe cation as cofactor.

The catalysed reaction is S-(5-deoxy-D-ribos-5-yl)-L-homocysteine = (S)-4,5-dihydroxypentane-2,3-dione + L-homocysteine. Involved in the synthesis of autoinducer 2 (AI-2) which is secreted by bacteria and is used to communicate both the cell density and the metabolic potential of the environment. The regulation of gene expression in response to changes in cell density is called quorum sensing. Catalyzes the transformation of S-ribosylhomocysteine (RHC) to homocysteine (HC) and 4,5-dihydroxy-2,3-pentadione (DPD). The chain is S-ribosylhomocysteine lyase from Actinobacillus pleuropneumoniae serotype 5b (strain L20).